A 495-amino-acid chain; its full sequence is Thioredoxin reductase SEP1 (495 aa).

37–54 (DFVKPSPPGTTWGLGGTC) serves as a coordination point for FAD. A disulfide bridge links Cys54 with Cys59. His468 (proton acceptor) is an active-site residue. Positions 493-494 (CU) form a cross-link, cysteinyl-selenocysteine (Cys-Sec). A non-standard amino acid (selenocysteine) is located at residue Sec494.

Belongs to the class-I pyridine nucleotide-disulfide oxidoreductase family. As to quaternary structure, homodimer. It depends on FAD as a cofactor. In terms of processing, the N-terminus is blocked.

The enzyme catalyses [thioredoxin]-dithiol + NADP(+) = [thioredoxin]-disulfide + NADPH + H(+). Its activity is regulated as follows. Activity was very low in selenium-depleted cells, but increased 4-fold to the same level as in selenium-sufficient cells for 70 hours after the addition of 10 nm selenite. The protein is Thioredoxin reductase SEP1 (SEP1) of Emiliania huxleyi (Coccolithophore).